A 129-amino-acid polypeptide reads, in one-letter code: Large ribosomal subunit protein bL12 (129 aa).

The protein belongs to the bacterial ribosomal protein bL12 family. Homodimer. Part of the ribosomal stalk of the 50S ribosomal subunit. Forms a multimeric L10(L12)X complex, where L10 forms an elongated spine to which 2 to 4 L12 dimers bind in a sequential fashion. Binds GTP-bound translation factors.

Its function is as follows. Forms part of the ribosomal stalk which helps the ribosome interact with GTP-bound translation factors. Is thus essential for accurate translation. This is Large ribosomal subunit protein bL12 from Micrococcus luteus (strain ATCC 4698 / DSM 20030 / JCM 1464 / CCM 169 / CCUG 5858 / IAM 1056 / NBRC 3333 / NCIMB 9278 / NCTC 2665 / VKM Ac-2230) (Micrococcus lysodeikticus).